The following is a 533-amino-acid chain: Neuropilin and tolloid-like protein 1 (533 aa).

An N-terminal signal peptide occupies residues 1-22 (MIYGRSLFHIIASLIILHSSGA). Over 23-344 (TKKGTEKQIT…LDQLTNTSGT (322 aa)) the chain is Extracellular. Cystine bridges form between Cys41–Cys68, Cys96–Cys118, Cys172–Cys202, Cys229–Cys251, Cys292–Cys304, Cys299–Cys317, and Cys311–Cys326. CUB domains follow at residues 41-155 (CGTW…YNFT) and 172-287 (CEFE…FTSF). An LDL-receptor class A domain is found at 291–327 (PCEGNTFFCHSNMCINNTLVCNGLQNCVYPWDENHCK). N-linked (GlcNAc...) asparagine glycosylation is present at Asn306. Asn340 is a glycosylation site (N-linked (GlcNAc...) asparagine). The chain crosses the membrane as a helical span at residues 345-365 (VIGVTSCIVIILIIVSVIVQI). Residues 366 to 533 (KQPRKKYVQR…HESEYNTTRV (168 aa)) are Cytoplasmic-facing. The residue at position 417 (Tyr417) is a Phosphotyrosine. The short motif at 531-533 (TRV) is the PDZ-binding element.

As to quaternary structure, interacts with PLZ domains of DLG2, DLG3 and DLG4 via its C-terminal TRV domain. Interacts with GRIN2A and GRIN2B via its CUB domains. In terms of tissue distribution, expressed only in brain. Present throughout the central nervous system. Highly expressed in the hippocampal CA3 region, olfactory bulb and tubercle, caudate putamen, and neocortex in the adult brain.

The protein resides in the membrane. Its subcellular location is the postsynaptic density membrane. Involved in the development and/or maintenance of neuronal circuitry. Accessory subunit of the neuronal N-methyl-D-aspartate receptor (NMDAR) critical for maintaining the abundance of GRIN2A-containing NMDARs in the postsynaptic density. Regulates long-term NMDA receptor-dependent synaptic plasticity and cognition, at least in the context of spatial learning and memory. The protein is Neuropilin and tolloid-like protein 1 (Neto1) of Mus musculus (Mouse).